A 291-amino-acid chain; its full sequence is ATP synthase gamma chain (291 aa).

This sequence belongs to the ATPase gamma chain family. F-type ATPases have 2 components, CF(1) - the catalytic core - and CF(0) - the membrane proton channel. CF(1) has five subunits: alpha(3), beta(3), gamma(1), delta(1), epsilon(1). CF(0) has three main subunits: a, b and c.

It is found in the cell inner membrane. In terms of biological role, produces ATP from ADP in the presence of a proton gradient across the membrane. The gamma chain is believed to be important in regulating ATPase activity and the flow of protons through the CF(0) complex. The polypeptide is ATP synthase gamma chain (Rhodopseudomonas palustris (strain BisB5)).